We begin with the raw amino-acid sequence, 250 residues long: Hydroxyacylglutathione hydrolase (250 aa).

Zn(2+)-binding residues include histidine 53, histidine 55, aspartate 57, histidine 58, histidine 110, aspartate 127, and histidine 165.

The protein belongs to the metallo-beta-lactamase superfamily. Glyoxalase II family. Monomer. Zn(2+) serves as cofactor.

The enzyme catalyses an S-(2-hydroxyacyl)glutathione + H2O = a 2-hydroxy carboxylate + glutathione + H(+). The protein operates within secondary metabolite metabolism; methylglyoxal degradation; (R)-lactate from methylglyoxal: step 2/2. Thiolesterase that catalyzes the hydrolysis of S-D-lactoyl-glutathione to form glutathione and D-lactic acid. In Photorhabdus laumondii subsp. laumondii (strain DSM 15139 / CIP 105565 / TT01) (Photorhabdus luminescens subsp. laumondii), this protein is Hydroxyacylglutathione hydrolase.